Reading from the N-terminus, the 255-residue chain is 5'-nucleotidase SurE (255 aa).

Residues Asp-8, Asp-9, Ser-40, and Asn-93 each contribute to the a divalent metal cation site.

It belongs to the SurE nucleotidase family. Requires a divalent metal cation as cofactor.

The protein resides in the cytoplasm. It catalyses the reaction a ribonucleoside 5'-phosphate + H2O = a ribonucleoside + phosphate. Nucleotidase that shows phosphatase activity on nucleoside 5'-monophosphates. In Bradyrhizobium sp. (strain ORS 278), this protein is 5'-nucleotidase SurE.